The sequence spans 791 residues: MASPSEQYIFGEFSDDEFKQFFVTARCTVELPPYNEHFFPCGPQSSGDFQDGEECPRIEFGIEEVIDHNTTLPNNTDYSISSNLNPQAPEFILTCSSSPKDSNNVLHENNFDAIDCQFSESSIPDGSGNADSDGTSGTGQRERKKKKKRPPGYYSYLEGVGDVPSETLLNGHANSAGLNSISTDDPDLAEDIPISTTSPRTCTSPDNFVDLNNEALSDDASMHNVLDNTRTAGQPEECSVTSSEQSCIPSDNGRESPVRTAVVQPFAGTDTTENLGVTNGQTLESPEEDTASNGVVLHPEVISLSEEAKAEEISTAQAVIHLPGSASANAPAKSWASLFHNSKPSSTPQVAYVETKNTPPVTSLQVTEKQVEIKEGPVPVSEDPVAIKIAELLEEVKLVHKPVSLQPRGLINKGNWCYINATLQALVACPPMYHLMKSIPVYTKAQKPCTSTPMIDSFVRLMNEFTNMPILPKAKQAPGEKVVRDIRPGAPFEPAYIYRLLTVFKSSLSEKGRQEDAEEYLGFILNGLHEEMLALKKLLLPQNDKIHINNGPDPVFATEEVNKEEQEGSDEEWEQVGPRNKSSVTRQADFVQTPITDIFGGHMRSVVYQQSSKESATLQPFFTLQLDIQSEKIRTVQDALESLVARESVQGYTTKTKQEVEICRRVTLEELPPVLVLHLKRFVFEKTGGCQKLIKNIEYPVDLEISKDLLSPGVKSKIFKGQRTYRLFAVVYHHGNSATGGHYTTDVFQIGLNGWLRIDDQTVKVINQYQVVKQTVERTAYLLYYRRVDLL.

Composition is skewed to polar residues over residues 118–139 (FSES…SGTG) and 270–284 (DTTE…QTLE). Disordered stretches follow at residues 118 to 156 (FSES…YYSY) and 270 to 291 (DTTE…EDTA). The 381-residue stretch at 408 to 788 (RGLINKGNWC…TAYLLYYRRV (381 aa)) folds into the USP domain. Cys417 serves as the catalytic Nucleophile. The disordered stretch occupies residues 560–580 (EVNKEEQEGSDEEWEQVGPRN). His742 (proton acceptor) is an active-site residue.

This sequence belongs to the peptidase C19 family. USP10 subfamily.

It localises to the cytoplasm. It is found in the nucleus. The enzyme catalyses Thiol-dependent hydrolysis of ester, thioester, amide, peptide and isopeptide bonds formed by the C-terminal Gly of ubiquitin (a 76-residue protein attached to proteins as an intracellular targeting signal).. Its function is as follows. Hydrolase that can remove conjugated ubiquitin from target proteins such as p53/tp53, rps2/us5, rps3/us3, rps10/eS10, becn1, snx3 and cftr. Acts as an essential regulator of p53/tp53 stability: in unstressed cells, specifically deubiquitinates p53/tp53 in the cytoplasm, leading to counteracts MDM2 action and stabilize p53/tp53. Following DNA damage, translocates to the nucleus and deubiquitinates p53/tp53, leading to regulate the p53/TP53-dependent DNA damage response. Component of a regulatory loop that controls autophagy and p53/tp53 levels. Plays a key role in 40S ribosome subunit recycling when a ribosome has stalled during translation: acts both by inhibiting formation of stress granules, which store stalled translation pre-initiation complexes, and mediating deubiquitination of 40S ribosome subunits. Deubiquitinates cftr in early endosomes, enhancing its endocytic recycling. This is Ubiquitin carboxyl-terminal hydrolase 10-A (usp10-a) from Xenopus laevis (African clawed frog).